A 324-amino-acid polypeptide reads, in one-letter code: Cuticle collagen lon-3 (324 aa).

The signal sequence occupies residues methionine 1–serine 30. Residues valine 119–tyrosine 324 form a disordered region. Triple-helical region regions lie at residues glycine 129 to aspartate 152, glycine 170 to aspartate 229, and glycine 235 to proline 294. Low complexity-rich tracts occupy residues proline 136–glutamine 151, proline 168–proline 181, proline 210–serine 223, glycine 235–glutamine 246, and glutamate 261–proline 273. Residues lysine 296–asparagine 311 show a composition bias toward basic and acidic residues. Residues arginine 314–tyrosine 324 show a composition bias toward basic residues.

The protein belongs to the cuticular collagen family. Collagen polypeptide chains are complexed within the cuticle by disulfide bonds and other types of covalent cross-links.

Functionally, nematode cuticles are composed largely of collagen-like proteins. The cuticle functions both as an exoskeleton and as a barrier to protect the worm from its environment. Dose-dependent regulator of body length and shape. This chain is Cuticle collagen lon-3 (lon-3), found in Caenorhabditis elegans.